The chain runs to 189 residues: Ribosome hibernation promotion factor (189 aa).

This sequence belongs to the HPF/YfiA ribosome-associated protein family. Long HPF subfamily. Interacts with 100S ribosomes.

It is found in the cytoplasm. Required for dimerization of active 70S ribosomes into 100S ribosomes in stationary phase; 100S ribosomes are translationally inactive and sometimes present during exponential growth. This chain is Ribosome hibernation promotion factor, found in Staphylococcus epidermidis (strain ATCC 35984 / DSM 28319 / BCRC 17069 / CCUG 31568 / BM 3577 / RP62A).